The sequence spans 727 residues: Glycerol-3-phosphate dehydrogenase, mitochondrial (727 aa).

Residues 1 to 42 constitute a mitochondrion transit peptide; the sequence is MAFQKVVKGTILMGGGALATVLGLSQFAHYRRKQVSLAYVEA. Position 71 to 99 (71 to 99) interacts with FAD; sequence DILVIGGGATGCGCALDAVTRGLKTALVE. Position 601 is a phosphotyrosine (Tyr-601). EF-hand domains are found at residues 623 to 658 and 659 to 694; these read PDIDRYKKRFHMFDEDEKGFITIVDVQRVLESINVQ and MDEDTLHEILCEVDLNKNGQVELHEFLQLMSAVHTG. Residues Asp-672, Asn-674, Asn-676, Gln-678, and Glu-683 each coordinate Ca(2+).

Belongs to the FAD-dependent glycerol-3-phosphate dehydrogenase family. Requires FAD as cofactor.

The protein localises to the mitochondrion. It catalyses the reaction a quinone + sn-glycerol 3-phosphate = dihydroxyacetone phosphate + a quinol. The protein operates within polyol metabolism; glycerol degradation via glycerol kinase pathway; glycerone phosphate from sn-glycerol 3-phosphate (anaerobic route): step 1/1. Its activity is regulated as follows. Calcium-binding enhance the activity of the enzyme. Functionally, calcium-responsive mitochondrial glycerol-3-phosphate dehydrogenase which seems to be a key component of the pancreatic beta-cell glucose-sensing device. The chain is Glycerol-3-phosphate dehydrogenase, mitochondrial from Rattus norvegicus (Rat).